We begin with the raw amino-acid sequence, 390 residues long: 1-deoxy-D-xylulose 5-phosphate reductoisomerase (390 aa).

The NADPH site is built by Thr18, Gly19, Ser20, Ile21, and Asn130. A 1-deoxy-D-xylulose 5-phosphate-binding site is contributed by Lys131. Residue Glu132 coordinates NADPH. Mn(2+) is bound at residue Asp156. 1-deoxy-D-xylulose 5-phosphate is bound by residues Ser157, Glu158, Ser182, and His205. Glu158 is a Mn(2+) binding site. NADPH is bound at residue Gly211. 1-deoxy-D-xylulose 5-phosphate-binding residues include Ser218, Asn223, Lys224, and Glu227. Residue Glu227 participates in Mn(2+) binding.

It belongs to the DXR family. It depends on Mg(2+) as a cofactor. The cofactor is Mn(2+).

It catalyses the reaction 2-C-methyl-D-erythritol 4-phosphate + NADP(+) = 1-deoxy-D-xylulose 5-phosphate + NADPH + H(+). The protein operates within isoprenoid biosynthesis; isopentenyl diphosphate biosynthesis via DXP pathway; isopentenyl diphosphate from 1-deoxy-D-xylulose 5-phosphate: step 1/6. Functionally, catalyzes the NADPH-dependent rearrangement and reduction of 1-deoxy-D-xylulose-5-phosphate (DXP) to 2-C-methyl-D-erythritol 4-phosphate (MEP). The protein is 1-deoxy-D-xylulose 5-phosphate reductoisomerase of Bacteroides thetaiotaomicron (strain ATCC 29148 / DSM 2079 / JCM 5827 / CCUG 10774 / NCTC 10582 / VPI-5482 / E50).